The chain runs to 776 residues: Mitochondrial intermediate peptidase (776 aa).

The transit peptide at 1-28 directs the protein to the mitochondrion; the sequence is MRRFSTLSRRLQRVVPASSASTANTSPS. His561 provides a ligand contact to Zn(2+). Glu562 is a catalytic residue. The Zn(2+) site is built by His565 and His568.

The protein belongs to the peptidase M3 family. The cofactor is Zn(2+).

Its subcellular location is the mitochondrion matrix. It catalyses the reaction Release of an N-terminal octapeptide as second stage of processing of some proteins imported into the mitochondrion.. Functionally, cleaves proteins, imported into the mitochondrion, to their mature size. While most mitochondrial precursor proteins are processed to the mature form in one step by mitochondrial processing peptidase (MPP), the sequential cleavage by MIP of an octapeptide after initial processing by MPP is a required step for a subgroup of nuclear-encoded precursor proteins destined for the matrix or the inner membrane. The protein is Mitochondrial intermediate peptidase (OCT1) of Yarrowia lipolytica (strain CLIB 122 / E 150) (Yeast).